A 303-amino-acid chain; its full sequence is Phospholipase A1 2 (303 aa).

Cysteine 6 and cysteine 90 are disulfide-bonded. Serine 140 serves as the catalytic Nucleophile. The active-site Charge relay system is the aspartate 168. Cysteines 179 and 184 form a disulfide. The Charge relay system role is filled by histidine 232. Cystine bridges form between cysteine 247–cysteine 271, cysteine 248–cysteine 296, and cysteine 264–cysteine 269.

The protein belongs to the AB hydrolase superfamily. Lipase family. Expressed by the venom gland.

It is found in the secreted. It catalyses the reaction a 1,2-diacyl-sn-glycero-3-phosphocholine + H2O = a 2-acyl-sn-glycero-3-phosphocholine + a fatty acid + H(+). Its function is as follows. Catalyzes the hydrolysis of phosphatidylcholine with phospholipase A1 activity. May act as an allergen and induce hemolytic activity. The chain is Phospholipase A1 2 from Dolichovespula maculata (Bald-faced hornet).